We begin with the raw amino-acid sequence, 156 residues long: Small ribosomal subunit protein uS7 (156 aa).

This sequence belongs to the universal ribosomal protein uS7 family. As to quaternary structure, part of the 30S ribosomal subunit. Contacts proteins S9 and S11.

Its function is as follows. One of the primary rRNA binding proteins, it binds directly to 16S rRNA where it nucleates assembly of the head domain of the 30S subunit. Is located at the subunit interface close to the decoding center, probably blocks exit of the E-site tRNA. The protein is Small ribosomal subunit protein uS7 of Klebsiella pneumoniae (strain 342).